Reading from the N-terminus, the 162-residue chain is Sec-independent protein translocase protein TatB (162 aa).

Residues 1–21 (MFDIGFSELILIFVVGLVVLG) traverse the membrane as a helical segment. A disordered region spans residues 136–162 (LTAYYPPDDDLVSPSTTKLEQDKQNVN).

Belongs to the TatB family. As to quaternary structure, the Tat system comprises two distinct complexes: a TatABC complex, containing multiple copies of TatA, TatB and TatC subunits, and a separate TatA complex, containing only TatA subunits. Substrates initially bind to the TatABC complex, which probably triggers association of the separate TatA complex to form the active translocon.

It localises to the cell inner membrane. In terms of biological role, part of the twin-arginine translocation (Tat) system that transports large folded proteins containing a characteristic twin-arginine motif in their signal peptide across membranes. Together with TatC, TatB is part of a receptor directly interacting with Tat signal peptides. TatB may form an oligomeric binding site that transiently accommodates folded Tat precursor proteins before their translocation. The sequence is that of Sec-independent protein translocase protein TatB from Haemophilus ducreyi (strain 35000HP / ATCC 700724).